The primary structure comprises 1041 residues: Toll-like receptor 8 (1041 aa).

The signal sequence occupies residues 1–26 (MENMFLQSSMLTCIFLLISGSCELCA). Residues 27-827 (EENFSRSYPC…ELTTCVSDVT (801 aa)) are Extracellular-facing. N-linked (GlcNAc...) asparagine glycans are attached at residues N29, N42, N80, N88, and N115. Residues C36 and C49 are joined by a disulfide bond. LRR repeat units lie at residues 126–147 (NLRELLLEDNQLPQIPSGLPES), 148–168 (LTELSLIQNNIYNITKEGISR), 171–193 (NLKNLYLAWNCYFNKVCEKTNIE), 202–223 (NLELLSLSFNSLSHVPPKLPSS), 224–244 (LRKLFLSNTQIKYISEEDFKG), and 247–268 (NLTLLDLSGNCPRCFNAPFPCV). Residue N160 is glycosylated (N-linked (GlcNAc...) asparagine). A disulfide bond links C181 and C187. An N-linked (GlcNAc...) asparagine glycan is attached at N247. 2 disulfide bridges follow: C257–C270 and C260–C267. N-linked (GlcNAc...) asparagine glycans are attached at residues N285 and N293. LRR repeat units follow at residues 288 to 309 (QLRYLNLSSTSLRKINAAWFKN), 312 to 334 (HLKVLDLEFNYLVGEIASGAFLT), and 338 to 360 (RLEILDLSFNYIKGSYPQHINIS). N358 and N362 each carry an N-linked (GlcNAc...) asparagine glycan. LRR repeat units follow at residues 368-389 (SLRALHLRGYVFQELREDDFQP), 395-416 (NLSTINLGINFIKQIDFKLFQN), and 419-440 (NLEIIYLSENRISPLVKDTRQS). N395 and N416 each carry an N-linked (GlcNAc...) asparagine glycan. An N-linked (GlcNAc...) asparagine glycan is attached at N443. An intrachain disulfide couples C479 to C509. LRR repeat units follow at residues 482–503 (YGKALDLSLNSIFFIGPNQFEN), 506–527 (DIACLNLSANSNAQVLSGTEFS), 531–551 (HVKYLDLTNNRLDFDNASALT), and 555–577 (DLEVLDLSYNSHYFRIAGVTHHL). N-linked (GlcNAc...) asparagine glycosylation is found at N511 and N546. N582 and N590 each carry an N-linked (GlcNAc...) asparagine glycan. LRR repeat units lie at residues 585–606 (NLKVLNLSHNNIYTLTDKYNLE), 609–630 (SLVELVFSGNRLDILWNDDDNR), 640–661 (NLTRLDLSLNRLKHIPNEAFLN), 665–685 (SLTELHINDNMLKFFNWTLLQ), 689–710 (RLELLDLRGNKLLFLTDSLSDF), 713–734 (SLRTLLLSHNRISHLPSGFLSE), and 737–758 (SLKHLDLSSNLLKTINKSALET). N-linked (GlcNAc...) asparagine glycans are attached at residues N640 and N680. N752 is a glycosylation site (N-linked (GlcNAc...) asparagine). Residues 772-824 (NPFECTCDIGDFRRWMDEHLNVKIPRLVDVICASPGDQRGKSIVSLELTTCVS) enclose the LRRCT domain. A disulfide bond links C776 and C803. A helical membrane pass occupies residues 828-848 (AVILFFFTFFITTMVMLAALA). The Cytoplasmic portion of the chain corresponds to 849–1041 (HHLFYWDVWF…NMYVDSIKQY (193 aa)). In terms of domain architecture, TIR spans 878–1022 (TFYDAYISYD…LFWQTLRNVV (145 aa)).

The protein belongs to the Toll-like receptor family. In terms of assembly, homodimer. Interacts with MYD88 via their respective TIR domains. Interacts with UNC93B1. Interacts with BTK. Interacts with SMPDL3B. Post-translationally, ubiquitinated by RNF216; leading to degradation by the proteasome. In terms of processing, proteolytic processing occurs in monocytes and monocyte-derived macrophages by both furin-like proprotein convertase and cathepsins. The cleavage is necessary for dimer formation and subsequent activation. Expressed in myeloid dendritic cells, monocytes, and monocyte-derived dendritic cells.

The protein resides in the endosome membrane. With respect to regulation, activated by RNAs having enough uridines. Its function is as follows. Endosomal receptor that plays a key role in innate and adaptive immunity. Controls host immune response against pathogens through recognition of RNA degradation products specific to microorganisms that are initially processed by RNASET2. Recognizes GU-rich single-stranded RNA (GU-rich RNA) derived from SARS-CoV-2, SARS-CoV-1 and HIV-1 viruses. Upon binding to agonists, undergoes dimerization that brings TIR domains from the two molecules into direct contact, leading to the recruitment of TIR-containing downstream adapter MYD88 through homotypic interaction. In turn, the Myddosome signaling complex is formed involving IRAK4, IRAK1, TRAF6, TRAF3 leading to activation of downstream transcription factors NF-kappa-B and IRF7 to induce pro-inflammatory cytokines and interferons, respectively. This is Toll-like receptor 8 from Homo sapiens (Human).